The sequence spans 220 residues: Deoxyribose-phosphate aldolase (220 aa).

Asp-89 (proton donor/acceptor) is an active-site residue. Catalysis depends on Lys-151, which acts as the Schiff-base intermediate with acetaldehyde. Lys-180 (proton donor/acceptor) is an active-site residue.

Belongs to the DeoC/FbaB aldolase family. DeoC type 1 subfamily.

It is found in the cytoplasm. The catalysed reaction is 2-deoxy-D-ribose 5-phosphate = D-glyceraldehyde 3-phosphate + acetaldehyde. Its pathway is carbohydrate degradation; 2-deoxy-D-ribose 1-phosphate degradation; D-glyceraldehyde 3-phosphate and acetaldehyde from 2-deoxy-alpha-D-ribose 1-phosphate: step 2/2. Its function is as follows. Catalyzes a reversible aldol reaction between acetaldehyde and D-glyceraldehyde 3-phosphate to generate 2-deoxy-D-ribose 5-phosphate. In Mycoplasmopsis pulmonis (strain UAB CTIP) (Mycoplasma pulmonis), this protein is Deoxyribose-phosphate aldolase.